The following is a 174-amino-acid chain: Ribulose bisphosphate carboxylase small subunit, chloroplastic (174 aa).

A chloroplast-targeting transit peptide spans 1-45; it reads MAPTVMASSATSVAPFQGLKSTAGLPVSRRSNASSASVSNGGRIR.

This sequence belongs to the RuBisCO small chain family. Heterohexadecamer of 8 large and 8 small subunits.

It localises to the plastid. The protein resides in the chloroplast. Its function is as follows. RuBisCO catalyzes two reactions: the carboxylation of D-ribulose 1,5-bisphosphate, the primary event in carbon dioxide fixation, as well as the oxidative fragmentation of the pentose substrate. Both reactions occur simultaneously and in competition at the same active site. Although the small subunit is not catalytic it is essential for maximal activity. The chain is Ribulose bisphosphate carboxylase small subunit, chloroplastic from Hordeum vulgare (Barley).